The chain runs to 168 residues: NADH-quinone oxidoreductase subunit B (168 aa).

Residues Cys-37, Cys-38, Cys-103, and Cys-132 each coordinate [4Fe-4S] cluster.

Belongs to the complex I 20 kDa subunit family. In terms of assembly, NDH-1 is composed of 14 different subunits. Subunits NuoB, C, D, E, F, and G constitute the peripheral sector of the complex. Requires [4Fe-4S] cluster as cofactor.

The protein resides in the cell inner membrane. It catalyses the reaction a quinone + NADH + 5 H(+)(in) = a quinol + NAD(+) + 4 H(+)(out). In terms of biological role, NDH-1 shuttles electrons from NADH, via FMN and iron-sulfur (Fe-S) centers, to quinones in the respiratory chain. The immediate electron acceptor for the enzyme in this species is believed to be ubiquinone. Couples the redox reaction to proton translocation (for every two electrons transferred, four hydrogen ions are translocated across the cytoplasmic membrane), and thus conserves the redox energy in a proton gradient. The chain is NADH-quinone oxidoreductase subunit B from Campylobacter fetus subsp. fetus (strain 82-40).